The chain runs to 434 residues: Methylenetetrahydrofolate--tRNA-(uracil-5-)-methyltransferase TrmFO (434 aa).

10–15 lines the FAD pocket; that stretch reads GAGLAG.

The protein belongs to the MnmG family. TrmFO subfamily. It depends on FAD as a cofactor.

Its subcellular location is the cytoplasm. It catalyses the reaction uridine(54) in tRNA + (6R)-5,10-methylene-5,6,7,8-tetrahydrofolate + NADH + H(+) = 5-methyluridine(54) in tRNA + (6S)-5,6,7,8-tetrahydrofolate + NAD(+). The enzyme catalyses uridine(54) in tRNA + (6R)-5,10-methylene-5,6,7,8-tetrahydrofolate + NADPH + H(+) = 5-methyluridine(54) in tRNA + (6S)-5,6,7,8-tetrahydrofolate + NADP(+). Catalyzes the folate-dependent formation of 5-methyl-uridine at position 54 (M-5-U54) in all tRNAs. The protein is Methylenetetrahydrofolate--tRNA-(uracil-5-)-methyltransferase TrmFO of Bacillus mycoides (strain KBAB4) (Bacillus weihenstephanensis).